Reading from the N-terminus, the 543-residue chain is Oxalate--CoA ligase (543 aa).

Residue His-196–Val-207 participates in ATP binding. The FACS motif lies at Glu-410–Lys-458. The short motif at Ser-541 to Leu-543 is the C-terminal peroxisome targeting signal (PTS1) element.

It belongs to the ATP-dependent AMP-binding enzyme family. As to quaternary structure, interacts with PEX5.

The protein resides in the peroxisome matrix. The protein localises to the peroxisome membrane. It carries out the reaction oxalate + ATP + CoA = oxalyl-CoA + AMP + diphosphate. In terms of biological role, catalyzes the first step in a degradation pathway of oxalate to CO(2) to protect the cell against the harmful effects of oxalate derived from endogenous processes or an environmental sources. This chain is Oxalate--CoA ligase, found in Saccharomyces cerevisiae (strain ATCC 204508 / S288c) (Baker's yeast).